Here is a 120-residue protein sequence, read N- to C-terminus: ATP-dependent Clp protease adapter protein ClpS (120 aa).

Positions 9–32 (LTFNQDHPAEHEDDSSGIAVQESK) are disordered.

The protein belongs to the ClpS family. As to quaternary structure, binds to the N-terminal domain of the chaperone ClpA.

Involved in the modulation of the specificity of the ClpAP-mediated ATP-dependent protein degradation. This is ATP-dependent Clp protease adapter protein ClpS from Ectopseudomonas mendocina (strain ymp) (Pseudomonas mendocina).